Reading from the N-terminus, the 88-residue chain is Small ribosomal subunit protein bS20 (88 aa).

Residues 1 to 23 (MANTSSAKKATRKIARRAAINKN) form a disordered region.

It belongs to the bacterial ribosomal protein bS20 family.

Its function is as follows. Binds directly to 16S ribosomal RNA. The protein is Small ribosomal subunit protein bS20 of Mesorhizobium japonicum (strain LMG 29417 / CECT 9101 / MAFF 303099) (Mesorhizobium loti (strain MAFF 303099)).